A 158-amino-acid polypeptide reads, in one-letter code: CD-NTase/cGAS isopeptidase (158 aa).

The active-site Proton donor/acceptor is E38. H100, H102, and D113 together coordinate Zn(2+).

Belongs to the peptidase M67B family. Cap3 isopeptidase subfamily.

Metalloprotease priming reversal component of a CBASS antivirus system. CBASS (cyclic oligonucleotide-based antiphage signaling system) provides immunity against bacteriophages. The CD-NTase protein synthesizes cyclic nucleotides in response to infection; these serve as specific second messenger signals. The signals activate a diverse range of effectors, leading to bacterial cell death and thus abortive phage infection. A type II-A(GA) CBASS system. Its function is as follows. Reverses the primed state of CdnA, the CD-NTase. In terms of biological role, the capV-cdnA-cap2-cap3 operon provides about 10(4)-fold protection in strain BWHPSA011 against infection by phage PaMx41. In P.aeruginosa strain PAO1 it confers protection against phages PaMx41 and JBD18 but not JBD67 (JBD18 and JBD67 do not replicate in BWHPSA011 / Pa011). When acb2 in JBD67 is deleted this CBASS operon then protects against JDB67 also. This CBASS system limits prophage induction of lysogenized JBD67 as well as viral lytic replication. The polypeptide is CD-NTase/cGAS isopeptidase (Pseudomonas aeruginosa (strain BWHPSA011 / Pa011)).